The chain runs to 289 residues: MEQPGPRAPDPSLCHHNLQPTDDPNWDSYATTMRTAFTPKTGAVPALIRQNGIRRLGYTYSLSDPILNQTQYSDEYTWKSHSKEDLIKTETSRGIKSHKSHLNEDIFLWTLPHCQQTGTLKNCLPWKIPASMKEVNKALSNQFISLTKRDFVDRSKAQKIKKSSHLSLEWKKLLPQPPDTEFRRNYQIPAKIPELQDFSFKYGCYSSLPVASQGLVPSVLHSYLRNQEHTKKQTTYQSDYDKTYPDFLMLLNSFTSSQVKEYLQSLSYKDRQIIDRFIRTHCDTNKKKK.

The disordered stretch occupies residues 1–26 (MEQPGPRAPDPSLCHHNLQPTDDPNW). Mn regions lie at residues 30–42 (ATTM…PKTG), 69–83 (QTQY…SHSK), 144–157 (ISLT…RSKA), 179–193 (DTEF…AKIP), and 233–247 (QTTY…YPDF).

The protein is Testis-expressed protein 26 (TEX26) of Homo sapiens (Human).